Reading from the N-terminus, the 252-residue chain is 5'-nucleotidase SurE (252 aa).

4 residues coordinate a divalent metal cation: Asp-8, Asp-9, Ser-39, and Asn-91.

It belongs to the SurE nucleotidase family. A divalent metal cation is required as a cofactor.

The protein resides in the cytoplasm. The enzyme catalyses a ribonucleoside 5'-phosphate + H2O = a ribonucleoside + phosphate. Functionally, nucleotidase that shows phosphatase activity on nucleoside 5'-monophosphates. The polypeptide is 5'-nucleotidase SurE (Gemmatimonas aurantiaca (strain DSM 14586 / JCM 11422 / NBRC 100505 / T-27)).